The following is a 377-amino-acid chain: D-alanine--D-alanine ligase (377 aa).

The region spanning 137 to 346 is the ATP-grasp domain; sequence KELMTVNGIR…RSQQAEKLIQ (210 aa). Residue 167–222 coordinates ATP; the sequence is SKQLGEVVFVKAANQGSSVGVSRVTNAEEYENALRDSFQYDEKLLVEKAVESPTEL. Asp-300, Glu-313, and Asn-315 together coordinate Mg(2+).

It belongs to the D-alanine--D-alanine ligase family. The cofactor is Mg(2+). It depends on Mn(2+) as a cofactor.

The protein localises to the cytoplasm. The enzyme catalyses 2 D-alanine + ATP = D-alanyl-D-alanine + ADP + phosphate + H(+). Its pathway is cell wall biogenesis; peptidoglycan biosynthesis. Functionally, cell wall formation. In Oenococcus oeni (strain ATCC BAA-331 / PSU-1), this protein is D-alanine--D-alanine ligase.